The chain runs to 296 residues: Polyamine aminopropyltransferase (296 aa).

One can recognise a PABS domain in the interval 16–251; sequence HLWYFEYYTG…GMWSYTFASK (236 aa). S-methyl-5'-thioadenosine is bound at residue Gln-46. Residues His-77 and Asp-101 each coordinate spermidine. S-methyl-5'-thioadenosine-binding positions include Glu-121 and 152 to 153; that span reads NG. The active-site Proton acceptor is the Asp-170. 170–173 provides a ligand contact to spermidine; sequence DSTD.

The protein belongs to the spermidine/spermine synthase family. In terms of assembly, homodimer or homotetramer.

The protein resides in the cytoplasm. It catalyses the reaction S-adenosyl 3-(methylsulfanyl)propylamine + putrescine = S-methyl-5'-thioadenosine + spermidine + H(+). It participates in amine and polyamine biosynthesis; spermidine biosynthesis; spermidine from putrescine: step 1/1. Its function is as follows. Catalyzes the irreversible transfer of a propylamine group from the amino donor S-adenosylmethioninamine (decarboxy-AdoMet) to putrescine (1,4-diaminobutane) to yield spermidine. This Thermotoga petrophila (strain ATCC BAA-488 / DSM 13995 / JCM 10881 / RKU-1) protein is Polyamine aminopropyltransferase.